We begin with the raw amino-acid sequence, 185 residues long: Elongation factor P (185 aa).

Belongs to the elongation factor P family.

It is found in the cytoplasm. It functions in the pathway protein biosynthesis; polypeptide chain elongation. In terms of biological role, involved in peptide bond synthesis. Stimulates efficient translation and peptide-bond synthesis on native or reconstituted 70S ribosomes in vitro. Probably functions indirectly by altering the affinity of the ribosome for aminoacyl-tRNA, thus increasing their reactivity as acceptors for peptidyl transferase. In Anoxybacillus flavithermus (strain DSM 21510 / WK1), this protein is Elongation factor P.